The primary structure comprises 936 residues: Intimin (936 aa).

Positions 1-41 (MIIHGFCTGTRHKHKLRKTFIMLGAGLGLFFSVNQNSFANG) are cleaved as a signal peptide. The region spanning 63–112 (LFYTLKTGESVAQLSKSQGISVPVIWSLNKHLYSSESEMMKASPGQQIIL) is the LysM domain. Big-1 domains are found at residues 557-650 (ITNF…VIFV) and 657-748 (ITEI…VEFF). A BIG2 domain is found at 780 to 831 (KLQATGGNGKYTWKSSNTKIASVDNSGVITLNEKGSATITVVSGDNQSATYT). Cys-857 and Cys-934 are disulfide-bonded.

This sequence belongs to the intimin/invasin family.

The protein resides in the cell outer membrane. Functionally, an inverse autotransporter. In Citrobacter freundii, this protein is Intimin (eae).